The primary structure comprises 856 residues: 3-hydroxy-3-methylglutaryl-coenzyme A reductase (856 aa).

The next 4 helical transmembrane spans lie at 12–32 (FCAS…VCML), 89–109 (ILGI…SSVI), 123–143 (LFFF…QFAL), and 190–210 (VLCC…MTFY). N326 carries an N-linked (GlcNAc...) asparagine glycan. A helical membrane pass occupies residues 344–364 (SADHIVILILLLALAVKFVFF). Residues 365-443 (ETRDELTTTR…CEVMALVTSG (79 aa)) are linker. An N-linked (GlcNAc...) asparagine glycan is attached at N412. Residues 443-771 (GHIAGYQLEK…SCTMPSIEIG (329 aa)) form a catalytic region. Residues E528 and K659 each act as charge relay system in the active site. The N-linked (GlcNAc...) asparagine glycan is linked to N700. The active-site Charge relay system is D735. The active-site Proton donor is the H834. A disordered region spans residues 836–856 (RHNRSSVSTSGSEPSTPACKS). N838 carries N-linked (GlcNAc...) asparagine glycosylation. A compositionally biased stretch (low complexity) spans 840-856 (SSVSTSGSEPSTPACKS).

This sequence belongs to the HMG-CoA reductase family.

It is found in the endoplasmic reticulum membrane. The enzyme catalyses (R)-mevalonate + 2 NADP(+) + CoA = (3S)-3-hydroxy-3-methylglutaryl-CoA + 2 NADPH + 2 H(+). It participates in metabolic intermediate biosynthesis; (R)-mevalonate biosynthesis; (R)-mevalonate from acetyl-CoA: step 3/3. The activity of HMG-CoA-reductase is suppressed by exogenous mevalonate. Its function is as follows. Synthesis of mevalonate for the production of non-sterol isoprenoids, which are essential for growth differentiation. This is 3-hydroxy-3-methylglutaryl-coenzyme A reductase from Blattella germanica (German cockroach).